A 516-amino-acid polypeptide reads, in one-letter code: Histone H4 transcription factor (516 aa).

3 consecutive C2H2-type zinc fingers follow at residues 15–39 (LQCE…VTQH), 127–151 (FLCL…VEAH), and 167–191 (VLCG…LRSH). Residues 197 to 219 (VACPTCGGMFANNTKFLDHIRRQ) form a C2H2-type 4; degenerate zinc finger. C2H2-type zinc fingers lie at residues 227–249 (FQCS…MRNH), 253–276 (YKCP…RFRH), 282–304 (FKCD…LDTH), 310–335 (YSCD…RKVH), and 343–366 (YRCH…RKKH). The interval 371 to 516 (PSGHPRFRYK…AAEEPEVQMV (146 aa)) is interaction with NPAT. The required for activation of histone H4 transcription and contributes to DNA-binding stretch occupies residues 372-405 (SGHPRFRYKEHEDGYMRLQLVRYESVELTQQLLR). Disordered stretches follow at residues 429-456 (TVPG…PASQ) and 486-516 (PGEP…VQMV). Residues 436 to 445 (PQEEAEEEGG) are compositionally biased toward acidic residues.

Binds MBD2 and a histone deacetylase complex. Interacts with NPAT. Ubiquitinated. Ubiquitination may lead to proteasome-mediated degradation.

The protein localises to the nucleus. In terms of biological role, transcriptional repressor that binds to the consensus sequence 5'-CGGACGTT-3' and to the RB1 promoter. Transcriptional activator that promotes histone H4 gene transcription at the G1/S phase transition in conjunction with NPAT. Also activates transcription of the ATM and PRKDC genes. Autoregulates its expression by associating with its own promoter. This is Histone H4 transcription factor (HINFP) from Bos taurus (Bovine).